The chain runs to 271 residues: 2-dehydro-3-deoxyphosphooctonate aldolase (271 aa).

The protein belongs to the KdsA family.

It is found in the cytoplasm. It catalyses the reaction D-arabinose 5-phosphate + phosphoenolpyruvate + H2O = 3-deoxy-alpha-D-manno-2-octulosonate-8-phosphate + phosphate. It participates in carbohydrate biosynthesis; 3-deoxy-D-manno-octulosonate biosynthesis; 3-deoxy-D-manno-octulosonate from D-ribulose 5-phosphate: step 2/3. Its pathway is bacterial outer membrane biogenesis; lipopolysaccharide biosynthesis. In Campylobacter jejuni subsp. jejuni serotype O:2 (strain ATCC 700819 / NCTC 11168), this protein is 2-dehydro-3-deoxyphosphooctonate aldolase.